Reading from the N-terminus, the 947-residue chain is Bifunctional glutamine synthetase adenylyltransferase/adenylyl-removing enzyme (947 aa).

The adenylyl removase stretch occupies residues 1-440 (MTPLSSPLSQ…VFNELIGDDE (440 aa)). Residues 450–947 (SEPWREVWQD…ASWRKWLVAV (498 aa)) form an adenylyl transferase region.

This sequence belongs to the GlnE family. Mg(2+) serves as cofactor.

The enzyme catalyses [glutamine synthetase]-O(4)-(5'-adenylyl)-L-tyrosine + phosphate = [glutamine synthetase]-L-tyrosine + ADP. It catalyses the reaction [glutamine synthetase]-L-tyrosine + ATP = [glutamine synthetase]-O(4)-(5'-adenylyl)-L-tyrosine + diphosphate. In terms of biological role, involved in the regulation of glutamine synthetase GlnA, a key enzyme in the process to assimilate ammonia. When cellular nitrogen levels are high, the C-terminal adenylyl transferase (AT) inactivates GlnA by covalent transfer of an adenylyl group from ATP to specific tyrosine residue of GlnA, thus reducing its activity. Conversely, when nitrogen levels are low, the N-terminal adenylyl removase (AR) activates GlnA by removing the adenylyl group by phosphorolysis, increasing its activity. The regulatory region of GlnE binds the signal transduction protein PII (GlnB) which indicates the nitrogen status of the cell. This Salmonella paratyphi C (strain RKS4594) protein is Bifunctional glutamine synthetase adenylyltransferase/adenylyl-removing enzyme.